We begin with the raw amino-acid sequence, 232 residues long: Small ribosomal subunit protein uS5 (232 aa).

Residues 1 to 47 (MAAEVTETAQPVETAASTDNNREQREPRRGGRERNPNRDRGNRDADK) are disordered. Positions 7 to 19 (ETAQPVETAASTD) are enriched in polar residues. Residues 20 to 47 (NNREQREPRRGGRERNPNRDRGNRDADK) show a composition bias toward basic and acidic residues. The 64-residue stretch at 50-113 (FLERVVTINR…EEAKKNFFRV (64 aa)) folds into the S5 DRBM domain.

It belongs to the universal ribosomal protein uS5 family. In terms of assembly, part of the 30S ribosomal subunit. Contacts proteins S4 and S8.

Functionally, with S4 and S12 plays an important role in translational accuracy. Its function is as follows. Located at the back of the 30S subunit body where it stabilizes the conformation of the head with respect to the body. In Leifsonia xyli subsp. xyli (strain CTCB07), this protein is Small ribosomal subunit protein uS5.